Consider the following 445-residue polypeptide: 3-phosphoshikimate 1-carboxyvinyltransferase (445 aa).

3-phosphoshikimate is bound by residues K28, S29, and R33. Position 28 (K28) interacts with phosphoenolpyruvate. Phosphoenolpyruvate contacts are provided by G101 and R129. 3-phosphoshikimate contacts are provided by S175, Q177, D328, and K355. Residue Q177 participates in phosphoenolpyruvate binding. The active-site Proton acceptor is D328. Residues R359 and R402 each contribute to the phosphoenolpyruvate site.

Belongs to the EPSP synthase family. In terms of assembly, monomer.

It localises to the cytoplasm. The enzyme catalyses 3-phosphoshikimate + phosphoenolpyruvate = 5-O-(1-carboxyvinyl)-3-phosphoshikimate + phosphate. It functions in the pathway metabolic intermediate biosynthesis; chorismate biosynthesis; chorismate from D-erythrose 4-phosphate and phosphoenolpyruvate: step 6/7. Catalyzes the transfer of the enolpyruvyl moiety of phosphoenolpyruvate (PEP) to the 5-hydroxyl of shikimate-3-phosphate (S3P) to produce enolpyruvyl shikimate-3-phosphate and inorganic phosphate. The sequence is that of 3-phosphoshikimate 1-carboxyvinyltransferase from Bradyrhizobium sp. (strain BTAi1 / ATCC BAA-1182).